The sequence spans 360 residues: Protein DVR-1 (360 aa).

The N-terminal stretch at 1–16 is a signal peptide; it reads MVWLRLWAFLHILAIV. Positions 17–246 are excised as a propeptide; the sequence is TLDPELKRRE…LRCKRPRRKR (230 aa). Residues asparagine 113, asparagine 181, and asparagine 301 are each glycosylated (N-linked (GlcNAc...) asparagine). 3 disulfides stabilise this stretch: cysteine 259/cysteine 325, cysteine 288/cysteine 357, and cysteine 292/cysteine 359.

This sequence belongs to the TGF-beta family. As to quaternary structure, homodimer. In terms of tissue distribution, vegetal region of the egg.

It localises to the secreted. Serves to facilitate the differentiation of either mesoderm or endoderm either as a cofactor in an instructive signal or by providing permissive environment. In Xenopus laevis (African clawed frog), this protein is Protein DVR-1 (dvr1).